We begin with the raw amino-acid sequence, 182 residues long: Pyruvoyl-dependent arginine decarboxylase (182 aa).

Position 44 is a pyruvic acid (Ser) (serine 44).

It belongs to the PdaD family. The cofactor is pyruvate.

It carries out the reaction L-arginine + H(+) = agmatine + CO2. The sequence is that of Pyruvoyl-dependent arginine decarboxylase from Picrophilus torridus (strain ATCC 700027 / DSM 9790 / JCM 10055 / NBRC 100828 / KAW 2/3).